Here is a 205-residue protein sequence, read N- to C-terminus: ATP phosphoribosyltransferase (205 aa).

It belongs to the ATP phosphoribosyltransferase family. Short subfamily. Heteromultimer composed of HisG and HisZ subunits.

It is found in the cytoplasm. It catalyses the reaction 1-(5-phospho-beta-D-ribosyl)-ATP + diphosphate = 5-phospho-alpha-D-ribose 1-diphosphate + ATP. It functions in the pathway amino-acid biosynthesis; L-histidine biosynthesis; L-histidine from 5-phospho-alpha-D-ribose 1-diphosphate: step 1/9. In terms of biological role, catalyzes the condensation of ATP and 5-phosphoribose 1-diphosphate to form N'-(5'-phosphoribosyl)-ATP (PR-ATP). Has a crucial role in the pathway because the rate of histidine biosynthesis seems to be controlled primarily by regulation of HisG enzymatic activity. The polypeptide is ATP phosphoribosyltransferase (Nitratiruptor sp. (strain SB155-2)).